A 563-amino-acid chain; its full sequence is Testis-expressed basic protein 1 (563 aa).

Residues 3 to 23 form a helical membrane-spanning segment; the sequence is VLEITLAVILTLLGLAILAIL. The disordered stretch occupies residues 56 to 81; it reads GSRHAYSTQSDTSYDNRERSKRDYTP. Over residues 69-79 the composition is skewed to basic and acidic residues; it reads YDNRERSKRDY. Residues 99 to 119 form a helical membrane-spanning segment; the sequence is ELILLLMCFILALSRSSIGSI. Residues 311–563 are disordered; that stretch reads SEMSIPQGQG…GRKYNKKVEE (253 aa). The segment covering 367-383 has biased composition (basic and acidic residues); it reads QVEKSEMGVPRRQESQV. Residues 384–395 show a composition bias toward low complexity; the sequence is KKSQSGVSKGQE. 2 stretches are compositionally biased toward basic and acidic residues: residues 412 to 447 and 485 to 544; these read QVEK…KKSE and EAQE…EKSK.

The protein localises to the membrane. The protein is Testis-expressed basic protein 1 of Homo sapiens (Human).